Consider the following 526-residue polypeptide: NAD(P)H-quinone oxidoreductase chain 4 (526 aa).

A run of 13 helical transmembrane segments spans residues 5-25 (FPWL…VPLI), 32-52 (WYSF…FFTS), 87-107 (LILL…PVTL), 111-131 (MFHF…AVQD), 133-153 (VLFF…LAIW), 165-185 (FILY…AMYF), 211-231 (FLGL…HTWL), 239-259 (TAPV…YALI), 273-293 (FAPL…LTSF), 302-320 (IAYS…VGSL), 331-351 (QMIS…ATYD), 371-393 (IFAM…GFVA), and 414-434 (LVVL…LSML).

The protein belongs to the complex I subunit 4 family.

Its subcellular location is the cell inner membrane. It catalyses the reaction a plastoquinone + NADH + (n+1) H(+)(in) = a plastoquinol + NAD(+) + n H(+)(out). The catalysed reaction is a plastoquinone + NADPH + (n+1) H(+)(in) = a plastoquinol + NADP(+) + n H(+)(out). NDH-1 shuttles electrons from NAD(P)H, via FMN and iron-sulfur (Fe-S) centers, to quinones in the respiratory chain. The immediate electron acceptor for the enzyme in this species is believed to be plastoquinone. Couples the redox reaction to proton translocation (for every two electrons transferred, four hydrogen ions are translocated across the cytoplasmic membrane), and thus conserves the redox energy in a proton gradient. This is NAD(P)H-quinone oxidoreductase chain 4 from Gloeobacter violaceus (strain ATCC 29082 / PCC 7421).